Reading from the N-terminus, the 206-residue chain is 2,3-bisphosphoglycerate-dependent phosphoglycerate mutase (206 aa).

Substrate-binding positions include 9–16 (RHGQSEWN), 22–23 (TG), arginine 61, 88–91 (ERDY), lysine 99, 115–116 (RR), and 159–160 (GN). Residue histidine 10 is the Tele-phosphohistidine intermediate of the active site. Glutamate 88 functions as the Proton donor/acceptor in the catalytic mechanism.

It belongs to the phosphoglycerate mutase family. BPG-dependent PGAM subfamily. In terms of assembly, homodimer.

It catalyses the reaction (2R)-2-phosphoglycerate = (2R)-3-phosphoglycerate. It functions in the pathway carbohydrate degradation; glycolysis; pyruvate from D-glyceraldehyde 3-phosphate: step 3/5. In terms of biological role, catalyzes the interconversion of 2-phosphoglycerate and 3-phosphoglycerate. This is 2,3-bisphosphoglycerate-dependent phosphoglycerate mutase from Bartonella quintana (strain Toulouse) (Rochalimaea quintana).